Reading from the N-terminus, the 228-residue chain is 2,3-bisphosphoglycerate-dependent phosphoglycerate mutase (228 aa).

Residues 8–15 (RHGQSVWN), 21–22 (SG), arginine 58, 111–114 (ERMY), lysine 122, 138–139 (RR), and 182–183 (GN) each bind substrate. Histidine 9 functions as the Tele-phosphohistidine intermediate in the catalytic mechanism. Residue glutamate 111 is the Proton donor/acceptor of the active site.

It belongs to the phosphoglycerate mutase family. BPG-dependent PGAM subfamily.

The catalysed reaction is (2R)-2-phosphoglycerate = (2R)-3-phosphoglycerate. The protein operates within carbohydrate degradation; glycolysis; pyruvate from D-glyceraldehyde 3-phosphate: step 3/5. Functionally, catalyzes the interconversion of 2-phosphoglycerate and 3-phosphoglycerate. This Chlamydia pneumoniae (Chlamydophila pneumoniae) protein is 2,3-bisphosphoglycerate-dependent phosphoglycerate mutase.